The primary structure comprises 95 residues: Phosphoribosyl-ATP pyrophosphatase (95 aa).

It belongs to the PRA-PH family.

Its subcellular location is the cytoplasm. It carries out the reaction 1-(5-phospho-beta-D-ribosyl)-ATP + H2O = 1-(5-phospho-beta-D-ribosyl)-5'-AMP + diphosphate + H(+). It functions in the pathway amino-acid biosynthesis; L-histidine biosynthesis; L-histidine from 5-phospho-alpha-D-ribose 1-diphosphate: step 2/9. This Methanocella arvoryzae (strain DSM 22066 / NBRC 105507 / MRE50) protein is Phosphoribosyl-ATP pyrophosphatase.